We begin with the raw amino-acid sequence, 2181 residues long: Non-reducing polyketide synthase dpmaA (2181 aa).

The interval 74 to 180 (QWVKGNSTQP…LALCCGAYID (107 aa)) is N-terminal acylcarrier protein transacylase domain (SAT). The Ketosynthase family 3 (KS3) domain occupies 347–779 (QAQLLVLGPV…GTNAAMLVCQ (433 aa)). Catalysis depends on for beta-ketoacyl synthase activity residues Cys525, His661, and His702. Residues 891 to 1193 (VLAGQTGRRV…SFYPAALGEP (303 aa)) form a malonyl-CoA:ACP transacylase (MAT) domain region. Ser977 functions as the For acyl/malonyl transferase activity in the catalytic mechanism. The tract at residues 1269-1401 (VSLIGKTQNA…GVITLQEVYS (133 aa)) is N-terminal hotdog fold. One can recognise a PKS/mFAS DH domain in the interval 1269-1579 (VSLIGKTQNA…FQKIAISSLK (311 aa)). The interval 1276-1573 (QNAGVQTVEY…TILGAKFQKI (298 aa)) is product template (PT) domain. Positions 1425-1579 (SASVVQGDFI…FQKIAISSLK (155 aa)) are C-terminal hotdog fold. The segment covering 1587–1603 (GVPQTSGGRTPSSSITE) has biased composition (polar residues). Disordered stretches follow at residues 1587–1618 (GVPQ…PIPG) and 1652–1675 (ISGS…AMET). Residues 1653–1670 (SGSSRSTSSSPPSLESRS) are compositionally biased toward low complexity. Positions 1677–1753 (EITEGAGSAL…TLFHTIFPQQ (77 aa)) constitute a Carrier domain. An O-(pantetheine 4'-phosphoryl)serine modification is found at Ser1713. Residues 1982–2164 (EFMNCLFSYN…QSGFDHIDWT (183 aa)) are methyltransferase (CMeT) domain.

It functions in the pathway secondary metabolite biosynthesis; terpenoid biosynthesis. Non-reducing polyketide synthase; part of the gene cluster that mediates the biosynthesis of the diterpenoid pyrones subglutinols A and B. The first step of the pathway is the synthesis of the alpha-pyrone moiety by the polyketide synthase dpmaA via condensation of one acetyl-CoA starter unit with 3 malonyl-CoA units and 2 methylations. The alpha-pyrone is then combined with geranylgeranyl pyrophosphate (GGPP) formed by the GGPP synthase dpmaD through the action of the prenyltransferase dpmaC to yield a linear alpha-pyrone diterpenoid. Subsequent steps in the diterpenoid pyrone biosynthetic pathway involve the decalin core formation, which is initiated by the epoxidation of the C10-C11 olefin by the FAD-dependent oxidoreductase dpmaE, and is followed by a cyclization cascade catalyzed by the terpene cyclase dpmaB. The dehydrogenase dpmaF is then involved in tetrahydrofuran (THF) ring formation at the C5 unit to complete the formation of subglutinols A and B. The sequence is that of Non-reducing polyketide synthase dpmaA from Metarhizium anisopliae (Entomophthora anisopliae).